The following is a 201-amino-acid chain: Dimethylsulfoniopropionate lyase DddQ (201 aa).

A divalent metal cation-binding residues include His130, Glu134, Tyr136, and His169.

This sequence belongs to the non-heme iron-dependent dioxygenase family. Homodimer. It depends on a divalent metal cation as a cofactor.

It catalyses the reaction S,S-dimethyl-beta-propiothetin = acrylate + dimethyl sulfide + H(+). In terms of biological role, may act as a dimethylsulfoniopropionate (DMSP) in vitro, releasing dimethyl sulfide (DMS). DMS is the principal form by which sulfur is transported from oceans to the atmosphere. The real activity of the protein is however subject to debate and it is unclear whether it constitutes a real dimethylsulfoniopropionate lyase in vivo. The chain is Dimethylsulfoniopropionate lyase DddQ from Ruegeria pomeroyi (strain ATCC 700808 / DSM 15171 / DSS-3) (Silicibacter pomeroyi).